The chain runs to 323 residues: Beta-ketoacyl-[acyl-carrier-protein] synthase III (323 aa).

Catalysis depends on residues Cys114 and His250. The segment at Gln251–Arg255 is ACP-binding. Residue Asn280 is part of the active site.

Belongs to the thiolase-like superfamily. FabH family. As to quaternary structure, homodimer.

It is found in the cytoplasm. The enzyme catalyses malonyl-[ACP] + acetyl-CoA + H(+) = 3-oxobutanoyl-[ACP] + CO2 + CoA. It participates in lipid metabolism; fatty acid biosynthesis. In terms of biological role, catalyzes the condensation reaction of fatty acid synthesis by the addition to an acyl acceptor of two carbons from malonyl-ACP. Catalyzes the first condensation reaction which initiates fatty acid synthesis and may therefore play a role in governing the total rate of fatty acid production. Possesses both acetoacetyl-ACP synthase and acetyl transacylase activities. Its substrate specificity determines the biosynthesis of branched-chain and/or straight-chain of fatty acids. This chain is Beta-ketoacyl-[acyl-carrier-protein] synthase III, found in Rhodospirillum centenum (strain ATCC 51521 / SW).